The chain runs to 179 residues: uncharacterized protein (179 aa).

Positions 53 to 82 are disordered; that stretch reads SPEREDPESPTRGVDEVDGACSEPPTPRPE. Residues 54–67 are compositionally biased toward basic and acidic residues; that stretch reads PEREDPESPTRGVD.

This is an uncharacterized protein from Ictaluridae (bullhead catfishes).